The primary structure comprises 419 residues: Tyrosine--tRNA ligase (419 aa).

Residue Tyr34 participates in L-tyrosine binding. Positions 39-48 (PTADSLHIGN) match the 'HIGH' region motif. Residues Tyr169 and Gln173 each coordinate L-tyrosine. The 'KMSKS' region signature appears at 230-234 (KFGKT). Lys233 contacts ATP. An S4 RNA-binding domain is found at 352 to 419 (VPLVELLVSA…KKKYYLIRYA (68 aa)).

It belongs to the class-I aminoacyl-tRNA synthetase family. TyrS type 1 subfamily. Homodimer.

It is found in the cytoplasm. The catalysed reaction is tRNA(Tyr) + L-tyrosine + ATP = L-tyrosyl-tRNA(Tyr) + AMP + diphosphate + H(+). Catalyzes the attachment of tyrosine to tRNA(Tyr) in a two-step reaction: tyrosine is first activated by ATP to form Tyr-AMP and then transferred to the acceptor end of tRNA(Tyr). The chain is Tyrosine--tRNA ligase from Geobacillus kaustophilus (strain HTA426).